Reading from the N-terminus, the 69-residue chain is Microcin H47 immunity protein MchI (69 aa).

The Cytoplasmic portion of the chain corresponds to 1 to 6 (MSYKKL). A helical transmembrane segment spans residues 7–29 (YQLTAIFSLPLTILLVSLSSLRI). At 30–38 (VGEGNSYVD) the chain is on the periplasmic side. The helical transmembrane segment at 39–61 (VFLSFIIFLGFIELIHGIRKILV) threads the bilayer. Topologically, residues 62 to 69 (WSGWKNGS) are cytoplasmic.

It is found in the cell membrane. In terms of biological role, protects a microcin H47-producer cell against microcin H47. This is Microcin H47 immunity protein MchI (mchI) from Escherichia coli.